The primary structure comprises 583 residues: DNA ligase (583 aa).

E249 contacts ATP. K251 serves as the catalytic N6-AMP-lysine intermediate. ATP is bound by residues R256, R271, E301, F341, R416, and K422.

It belongs to the ATP-dependent DNA ligase family. It depends on Mg(2+) as a cofactor.

The catalysed reaction is ATP + (deoxyribonucleotide)n-3'-hydroxyl + 5'-phospho-(deoxyribonucleotide)m = (deoxyribonucleotide)n+m + AMP + diphosphate.. Functionally, DNA ligase that seals nicks in double-stranded DNA during DNA replication, DNA recombination and DNA repair. This Pyrobaculum calidifontis (strain DSM 21063 / JCM 11548 / VA1) protein is DNA ligase.